We begin with the raw amino-acid sequence, 322 residues long: Solute carrier family 35 member B1 (322 aa).

A run of 8 helical transmembrane segments spans residues 12-32, 51-71, 85-105, 136-156, 168-188, 210-230, 243-263, and 285-305; these read LRLP…GILQ, FALT…KILI, WLYA…NSAL, YPLA…LFMY, TVGF…LTGV, LWST…WEFL, ILLF…TVVY, and VILF…LVFL. The Di-lysine motif motif lies at 318-322; sequence KKTSH.

This sequence belongs to the nucleotide-sugar transporter family. SLC35B subfamily.

The protein localises to the endoplasmic reticulum membrane. It catalyses the reaction ADP(in) + ATP(out) = ADP(out) + ATP(in). The enzyme catalyses UDP(out) + ATP(in) = UDP(in) + ATP(out). The catalysed reaction is UTP(out) + ATP(in) = UTP(in) + ATP(out). It carries out the reaction dATP(out) + ATP(in) = dATP(in) + ATP(out). In terms of biological role, ATP:ADP antiporter that catalyzes the exchange of ATP and ADP across the endoplasmic reticulum (ER) membrane. Imports ATP from the cytosol to the ER lumen and exports ADP in the opposite direction. Regulates ER energy metabolism and protein biogenesis. Appears to be part of a calcium-dependent ER to cytosol low energy response axis, where calcium efflux from ER to the cytosol triggers ATP import into the ER lumen to maintain sufficient ATP supply. Provides ATP to ER chaperone HSPA5 that drives protein folding and trafficking in the ER. Can transport dATP, UTP or UDP in exchange for ATP, but the physiological relevance of this process remains to be established. This chain is Solute carrier family 35 member B1 (Slc35b1), found in Mus musculus (Mouse).